Consider the following 371-residue polypeptide: MFFRVRFLLFFLLFRNLCCLLTSGCLLRVYGVGFSLGFFICMQIICGVCLAWLFFSCFICTNWYFVLFLWDFDLGFVIRSTHICFTSLLFFLLYVHIFKCIVLIILFDTHILVWAVGFIIYIFIVVIGFIGYVLPCTMMSYWGLTVFSNILATVPVIGTWLCYWIWGSEYINDFTLLKLHVLHVLLPFVLILVIFMHLFCLHYFMSSDGFCDRFAFYCERLCFCMWFYLRDMFLAFLILFYVVYFIFINWYFVFHEESWVIVDTLKTSDKILPEWFFLFLFGFLKAVPDKFTGLLLMVILLFSLFLFILNCILWFVYCRSSLLWFTYSLILFYSIFMSGFLALYVILAYPIWMELQFWVLLLFMLVVCRLD.

Helical transmembrane passes span Val32 to Trp52, Phe76 to Phe98, Val113 to Val133, and Leu179 to Phe199. Heme b is bound by residues His82 and His96. Heme b contacts are provided by His183 and His197. Position 202 (His202) interacts with a ubiquinone. 4 consecutive transmembrane segments (helical) span residues Phe227 to Phe247, Leu296 to Val316, Leu329 to Tyr349, and Pro350 to Leu370.

The protein belongs to the cytochrome b family. The main subunits of complex b-c1 are: cytochrome b, cytochrome c1 and the Rieske protein. It depends on heme b as a cofactor.

It localises to the mitochondrion inner membrane. In terms of biological role, component of the ubiquinol-cytochrome c reductase complex (complex III or cytochrome b-c1 complex) that is part of the mitochondrial respiratory chain. The b-c1 complex mediates electron transfer from ubiquinol to cytochrome c. Contributes to the generation of a proton gradient across the mitochondrial membrane that is then used for ATP synthesis. The chain is Cytochrome b (MT-CYB) from Leishmania tarentolae (Sauroleishmania tarentolae).